The sequence spans 544 residues: Membrane protein insertase YidC (544 aa).

A disordered region spans residues Thr-29–Ser-58. Residues Ser-35 to Ser-46 show a composition bias toward polar residues. 3 helical membrane-spanning segments follow: residues Phe-341–Ile-361, Gly-421–Leu-441, and Pro-499–Val-519.

Belongs to the OXA1/ALB3/YidC family. Type 1 subfamily. Interacts with the Sec translocase complex via SecD. Specifically interacts with transmembrane segments of nascent integral membrane proteins during membrane integration.

Its subcellular location is the cell inner membrane. Functionally, required for the insertion and/or proper folding and/or complex formation of integral membrane proteins into the membrane. Involved in integration of membrane proteins that insert both dependently and independently of the Sec translocase complex, as well as at least some lipoproteins. Aids folding of multispanning membrane proteins. This is Membrane protein insertase YidC from Pseudoalteromonas translucida (strain TAC 125).